Here is a 776-residue protein sequence, read N- to C-terminus: GATOR2 complex protein Wdr24 (776 aa).

WD repeat units lie at residues 63-103 (NLSY…RQKQ), 109-149 (EHER…SINT), 152-192 (CNSE…KCMV), 196-235 (AHYG…GLEH), 238-280 (HTIA…IPFA), and 284-326 (EHTN…ALKA). The disordered stretch occupies residues 466–490 (HRSSFSNQKNPMNSRRATQVASDWP). Positions 469–490 (SFSNQKNPMNSRRATQVASDWP) are enriched in polar residues. The C4-type zinc finger occupies 703 to 726 (NCGECGRPMGGKVGWYCDKCKSMQ). Zn(2+) is bound by residues Cys-704, Cys-707, Cys-719, Cys-722, Cys-730, Cys-733, Cys-744, Cys-747, His-749, His-752, His-755, Cys-766, Cys-769, His-771, and Cys-773. The RING-type; atypical zinc finger occupies 728-776 (AKCCVCGLIVRGVYAWCQGCSHGGHIEHLQKYFAKHSKCPKCGHLCAYS).

This sequence belongs to the WD repeat WDR24 family. In terms of assembly, component of the GATOR complex consisting of mio, Nup44A/Seh1, Im11, Nplr3, Nplr2, Wdr24, Wdr59 and Sec13. Within the GATOR complex, probable component of the GATOR2 subcomplex which is likely composed of mio, Nup44A/Seh1, Wdr24, Wdr59 and Sec13. Interacts with Nup44A/Seh1. Interacts with mio. Interacts with Nplr3. The GATOR2 complex associates with unmet in the absence of S-adenosyl-L-methionine; the mio-Wdr24-Nup44A subcomplex is essential and sufficient for this interaction while Wdr59 and Sec13 are dispensable. This association acts as a nutrient sensor to inhibit mTORC1 signaling in the absence of methionine.

It localises to the lysosome. The protein localises to the cytoplasmic vesicle. It is found in the autophagosome. The catalysed reaction is S-ubiquitinyl-[E2 ubiquitin-conjugating enzyme]-L-cysteine + [acceptor protein]-L-lysine = [E2 ubiquitin-conjugating enzyme]-L-cysteine + N(6)-ubiquitinyl-[acceptor protein]-L-lysine.. Its pathway is protein modification; protein ubiquitination. Functionally, an essential component of the GATOR subcomplex GATOR2 which functions as an activator of the amino acid-sensing branch of the mTORC1 signaling pathway. The two GATOR subcomplexes, GATOR1 and GATOR2, regulate the mTORC1 pathway in order to mediate metabolic homeostasis, female gametogenesis and the response to amino acid limitation and complete starvation. GATOR2 activates the mTORC1 signaling pathway through the inhibition of the GATOR1 subcomplex, controlling the switch to cell proliferation and growth under nutrient replete conditions and during female oocyte development. GATOR2 probably acts as an E3 ubiquitin-protein ligase toward GATOR1. In the presence of abundant amino acids, the GATOR2 complex mediates ubiquitination of components of the GATOR1 complex, leading to GATOR1 inactivation. This GATOR2 component is required for activating mTORC1 and promoting cell growth in both germline and somatic cells. In addition to its role in regulation of the mTORC1 complex, functions independently of mTORC1 to promote the acidification of lysosomes and facilitates autophagic flux. The sequence is that of GATOR2 complex protein Wdr24 from Drosophila melanogaster (Fruit fly).